The sequence spans 567 residues: MGSAPDNDSTPLDGDFEREVYEALKLWKIPGIAIAVIDEESTWTEGYGIADLASSTKVEANTLFYGGSTTKAFTAALMSMLVEDNDRYPHVQWSTPVCELIRDDFVLGHPGRTADTTIEDILSHRTGMPGHDFSMGSVHAGQQATVQDVVRSLRFLPAAAPPRTTYIYNNAMYIVASHLIQTVTGEELRSLFQRYIWDPLGMSHTYLRLKDAVAGQEPLAKGYADESATDDDPQYEEVPWKDRPEISGAGAIISSVGDYAKWVHALMNPEASSSSSSSSDSTATTSLSAAICADVGTARTLIPPPSEPFLTPMAYCLGWNRYVYRGVEILTHDGGIDGFGAEIAMIPALKYGVVTMANSTYTSNFGGTCLVYKLIDDKLGIPAEDRYDWTQKYTDLVAQMDAYNANAVSYFYPTLPDPPRPGPTLPLAAYAGLYWHDGYGALELVLDAADGKLHATRTQAQYTTACALTFEHISGDFFTATVAVVGAQTVVPAEFALSPAGVPRAIGIGWEPHLGTEKRTWMRRVGADEAGRLLRGDQSHPHHAEAYVSYQREEAQLPEFLTSHLFV.

The protein belongs to the peptidase S12 family.

The protein operates within secondary metabolite biosynthesis. Hydrolase; part of the gene cluster that mediates the biosynthesis of the unguisins, gamma-aminobutyric acid (GABA)-containing fungal cyclic heptapeptides with the amino acid sequence cyclo-(D-Ala1-D-Val2-L-Phe3-D-Val4-D-Ala5-D-Trp6-GABA7) for unguisin A and cyclo-(D-Ala1-D-Val2-L-Leu3-D-Val4-D-Ala5-D-Trp6-GABA7) for unguisin B. Within the pathway, the hydrolase ungD catalyzes the hydrolysis between the D-tryptophan and GABA residues of unguisins A and B to produce the corresponding linear peptides. The alanine racemase ungC catalyzes the interconversion of L-alanine and D-alanine, providing the D-alanine which is accepted by the first adenylation domain of the nonribosomal peptide synthetase (NRPS) ungA. UngA is the main enzyme within the cluster which condenses the 7 residues using its respective 7 modules. The terminal condensation domain (Ct) is involved in cyclization with D-alanine and thereby releasing of unguisins A and B. The protein is Unguisins hydrolase ungD of Aspergillus violaceofuscus (strain CBS 115571).